A 251-amino-acid chain; its full sequence is Cobalt transport protein CbiM (251 aa).

The signal sequence occupies residues 1-27 (MNKKKNTILIGLYFLVGIMLFPDRIYA). 6 helical membrane passes run 35-55 (LPVKWAGIWWIAMLPFLALGI), 66-86 (GPGIKMLLALAGAFVFVLSSL), 103-123 (LGAILFGPWPMVVLGCIVLIF), 131-151 (GGLTTLGANVFSMAIVGPFVA), 166-186 (WLSVFTGSALGNLLTYITTAT), and 208-228 (VFATTQVPLAVTEGLVTVLIF).

It belongs to the CbiM family. As to quaternary structure, forms an energy-coupling factor (ECF) transporter complex composed of an ATP-binding protein (A component, CbiO), a transmembrane protein (T component, CbiQ) and 2 possible substrate-capture proteins (S components, CbiM and CbiN) of unknown stoichimetry.

The protein localises to the cell membrane. The protein operates within cofactor biosynthesis; adenosylcobalamin biosynthesis. Functionally, part of the energy-coupling factor (ECF) transporter complex CbiMNOQ involved in cobalt import. This Acetohalobium arabaticum (strain ATCC 49924 / DSM 5501 / Z-7288) protein is Cobalt transport protein CbiM.